The chain runs to 157 residues: Protein Smg (157 aa).

It belongs to the Smg family.

The polypeptide is Protein Smg (Pectobacterium carotovorum subsp. carotovorum (strain PC1)).